A 101-amino-acid polypeptide reads, in one-letter code: NAD(P)H-quinone oxidoreductase subunit 4L, chloroplastic (101 aa).

Helical transmembrane passes span 2–22 (MLEH…YGLI), 32–52 (MCLE…SDLF), and 61–81 (IFSI…PAIV).

The protein belongs to the complex I subunit 4L family. NDH is composed of at least 16 different subunits, 5 of which are encoded in the nucleus.

Its subcellular location is the plastid. It localises to the chloroplast thylakoid membrane. It catalyses the reaction a plastoquinone + NADH + (n+1) H(+)(in) = a plastoquinol + NAD(+) + n H(+)(out). The enzyme catalyses a plastoquinone + NADPH + (n+1) H(+)(in) = a plastoquinol + NADP(+) + n H(+)(out). Functionally, NDH shuttles electrons from NAD(P)H:plastoquinone, via FMN and iron-sulfur (Fe-S) centers, to quinones in the photosynthetic chain and possibly in a chloroplast respiratory chain. The immediate electron acceptor for the enzyme in this species is believed to be plastoquinone. Couples the redox reaction to proton translocation, and thus conserves the redox energy in a proton gradient. This Chloranthus spicatus (Chulantree) protein is NAD(P)H-quinone oxidoreductase subunit 4L, chloroplastic.